The following is a 568-amino-acid chain: Protein yellow (568 aa).

The N-terminal stretch at 1-28 is a signal peptide; that stretch reads MHAQDKGGILPALSLLLIAVAMVSPSQA. Residues N151 and N222 are each glycosylated (N-linked (GlcNAc...) asparagine).

It belongs to the major royal jelly protein family.

It localises to the secreted. Controls the pigmentation pattern of the adult cuticle and larval mouth parts. This chain is Protein yellow (y), found in Drosophila subobscura (Fruit fly).